A 343-amino-acid polypeptide reads, in one-letter code: Dihydroorotase (343 aa).

Residues histidine 14 and histidine 16 each contribute to the Zn(2+) site. Residues 16-18 (HLR) and asparagine 42 each bind substrate. Residues lysine 100, histidine 137, and histidine 175 each contribute to the Zn(2+) site. Lysine 100 is modified (N6-carboxylysine). Histidine 137 lines the substrate pocket. Residue leucine 220 participates in substrate binding. Aspartate 248 provides a ligand contact to Zn(2+). The active site involves aspartate 248. Residues histidine 252 and alanine 264 each coordinate substrate.

The protein belongs to the metallo-dependent hydrolases superfamily. DHOase family. Class II DHOase subfamily. As to quaternary structure, homodimer. Requires Zn(2+) as cofactor.

It catalyses the reaction (S)-dihydroorotate + H2O = N-carbamoyl-L-aspartate + H(+). Its pathway is pyrimidine metabolism; UMP biosynthesis via de novo pathway; (S)-dihydroorotate from bicarbonate: step 3/3. In terms of biological role, catalyzes the reversible cyclization of carbamoyl aspartate to dihydroorotate. The protein is Dihydroorotase of Synechococcus sp. (strain CC9902).